The primary structure comprises 209 residues: Superoxide dismutase [Mn/Fe] (209 aa).

4 residues coordinate Fe(3+): His-38, His-90, Asp-172, and His-176. Mn(2+)-binding residues include His-38, His-90, Asp-172, and His-176.

Belongs to the iron/manganese superoxide dismutase family. Mn(2+) is required as a cofactor. Fe(3+) serves as cofactor.

The catalysed reaction is 2 superoxide + 2 H(+) = H2O2 + O2. Its function is as follows. Destroys superoxide anion radicals which are normally produced within the cells and which are toxic to biological systems. Catalyzes the dismutation of superoxide anion radicals into O2 and H2O2 by successive reduction and oxidation of the transition metal ion at the active site. The polypeptide is Superoxide dismutase [Mn/Fe] (sodB) (Rickettsia bellii (strain RML369-C)).